The following is a 367-amino-acid chain: 2-aminoethylphosphonate--pyruvate transaminase (367 aa).

An N6-(pyridoxal phosphate)lysine modification is found at Lys-194.

The protein belongs to the class-V pyridoxal-phosphate-dependent aminotransferase family. PhnW subfamily. In terms of assembly, homodimer. Pyridoxal 5'-phosphate serves as cofactor.

The enzyme catalyses (2-aminoethyl)phosphonate + pyruvate = phosphonoacetaldehyde + L-alanine. Involved in phosphonate degradation. In Salmonella dublin (strain CT_02021853), this protein is 2-aminoethylphosphonate--pyruvate transaminase.